Consider the following 610-residue polypeptide: Protein SAN1 (610 aa).

Polar residues predominate over residues 1-10 (MSESGQEQNR). Disordered regions lie at residues 1-36 (MSESGQEQNRGTNTSPNNAENNNNSNAASGPLNGGA) and 176-231 (VDST…PSIP). Residues 11-36 (GTNTSPNNAENNNNSNAASGPLNGGA) are compositionally biased toward low complexity. Basic and acidic residues predominate over residues 194-203 (EGTKKRKDNE). Polar residues predominate over residues 210-223 (TADNDSNPSITNAT). The RING-type zinc-finger motif lies at 240–280 (NDEETNPSYKHSPIKLPCGHIFGRECIYKWSRLENSCPLCR). Disordered regions lie at residues 318 to 348 (TAVNSTNENSSAPSENTSNTTVPTIGNASSG), 360 to 453 (VPQN…TDPH), 471 to 502 (GTSDTSATTAPGAQTVHNQGRNDSSSSDTTQG), 514 to 554 (GHFT…GVAS), and 569 to 610 (NNNS…RSSQ). The span at 319–348 (AVNSTNENSSAPSENTSNTTVPTIGNASSG) shows a compositional bias: polar residues. 2 stretches are compositionally biased toward low complexity: residues 384-406 (NGPSSTTQNPPSNSGGSNNNQSP) and 425-447 (PSASDSSASPSAANGPNSNNTSS). The span at 471 to 492 (GTSDTSATTAPGAQTVHNQGRN) shows a compositional bias: polar residues. Low complexity predominate over residues 493–502 (DSSSSDTTQG). 2 stretches are compositionally biased toward polar residues: residues 533–554 (QQRGGSTGENNRNNLFSSGVAS) and 592–610 (DTTIHNDVPNDNNEQRSSQ).

In terms of biological role, plays a specific role in mating-type regulation of yeast, by acting post-translationally to control the stability or activity of the SIR4 proteins. In Saccharomyces cerevisiae (strain ATCC 204508 / S288c) (Baker's yeast), this protein is Protein SAN1 (SAN1).